The sequence spans 367 residues: tRNA-specific 2-thiouridylase MnmA 2 (367 aa).

ATP contacts are provided by residues 10 to 17 (GMSGGVDS) and methionine 36. The interval 96-98 (NPD) is interaction with target base in tRNA. Cysteine 101 acts as the Nucleophile in catalysis. An intrachain disulfide couples cysteine 101 to cysteine 197. Position 125 (glycine 125) interacts with ATP. The interval 147–149 (KDQ) is interaction with tRNA. Cysteine 197 acts as the Cysteine persulfide intermediate in catalysis. The segment at 314 to 315 (RY) is interaction with tRNA.

It belongs to the MnmA/TRMU family.

The protein resides in the cytoplasm. It catalyses the reaction S-sulfanyl-L-cysteinyl-[protein] + uridine(34) in tRNA + AH2 + ATP = 2-thiouridine(34) in tRNA + L-cysteinyl-[protein] + A + AMP + diphosphate + H(+). In terms of biological role, catalyzes the 2-thiolation of uridine at the wobble position (U34) of tRNA, leading to the formation of s(2)U34. This chain is tRNA-specific 2-thiouridylase MnmA 2, found in Aliarcobacter butzleri (strain RM4018) (Arcobacter butzleri).